Reading from the N-terminus, the 875-residue chain is Probable serine/threonine-protein kinase samkC (875 aa).

The segment covering 1–12 (METTTITSILDD) has biased composition (polar residues). The segment at 1–47 (METTTITSILDDNNNNNNNNNNNNNNNNNNNNNNNNNNNNNNNNNYN) is disordered. The segment covering 13–45 (NNNNNNNNNNNNNNNNNNNNNNNNNNNNNNNNN) has biased composition (low complexity). The SAM domain maps to 51 to 116 (WDNEMVCKWL…SEFDDLKNIF (66 aa)). Positions 135-162 (DNNNLNNLNNNNNNNNNNNNNNNNNNNN) form a coiled coil. A compositionally biased stretch (low complexity) spans 136 to 168 (NNNLNNLNNNNNNNNNNNNNNNNNNNNNNNNNN). The segment at 136–170 (NNNLNNLNNNNNNNNNNNNNNNNNNNNNNNNNNKT) is disordered. The Protein kinase domain occupies 181–452 (YVFIKQMKGS…SKQLLNFSWF (272 aa)). ATP-binding positions include 187-195 (MKGSVNCSL) and Lys-210. Asp-301 functions as the Proton acceptor in the catalytic mechanism. Disordered regions lie at residues 331 to 362 (NNND…NDTN) and 461 to 718 (SEPQ…NNNN). Low complexity predominate over residues 474 to 554 (PQTSQSKPKP…KPKPSSSLSS (81 aa)). A compositionally biased stretch (pro residues) spans 555 to 564 (EPPPLEPQPK). Composition is skewed to low complexity over residues 565-581 (PQTS…LSSS), 589-611 (QPTQ…SQPT), and 617-653 (QPKS…QQQK). Residues 626 to 655 (QSKQQQQQQQQQQQQQQQQQQQQQQQQKSK) are a coiled coil. Residues 654 to 663 (SKPEQSKSKP) are compositionally biased toward basic and acidic residues. The span at 664–718 (EQSQSKPQPGQPLQSPSKPQPIPSTTKTTTTTTTTTTPNNNNNNNNNNNNNNNNN) shows a compositional bias: low complexity. The helical transmembrane segment at 842 to 862 (TLILYTFYYFLSNTLIYQIIL) threads the bilayer.

The protein belongs to the protein kinase superfamily. Ser/Thr protein kinase family.

It localises to the membrane. It carries out the reaction L-seryl-[protein] + ATP = O-phospho-L-seryl-[protein] + ADP + H(+). The catalysed reaction is L-threonyl-[protein] + ATP = O-phospho-L-threonyl-[protein] + ADP + H(+). The protein is Probable serine/threonine-protein kinase samkC (samkC) of Dictyostelium discoideum (Social amoeba).